The chain runs to 372 residues: Ligninase C (372 aa).

A signal peptide spans 1-26 (MAFKSLLSFVSVIGALQGANAALTRR). Catalysis depends on histidine 74, which acts as the Proton acceptor. Ca(2+) contacts are provided by aspartate 75, glycine 93, aspartate 95, and serine 97. Asparagine 129 carries an N-linked (GlcNAc...) asparagine glycan. Histidine 205 contacts heme b. Ca(2+) is bound by residues threonine 206, aspartate 223, threonine 225, leucine 228, and aspartate 230. The segment at 346–372 (TPFPTFPTDPGPKTAVAPVPKPPAARK) is disordered.

The protein belongs to the peroxidase family. Ligninase subfamily. Ca(2+) is required as a cofactor. Heme b serves as cofactor.

It catalyses the reaction 1-(3,4-dimethoxyphenyl)-2-(2-methoxyphenoxy)propane-1,3-diol + H2O2 = 3,4-dimethoxybenzaldehyde + guaiacol + glycolaldehyde + H2O. It carries out the reaction 2 (3,4-dimethoxyphenyl)methanol + H2O2 = 2 (3,4-dimethoxyphenyl)methanol radical + 2 H2O. It functions in the pathway secondary metabolite metabolism; lignin degradation. Its function is as follows. Depolymerization of lignin. Catalyzes the C(alpha)-C(beta) cleavage of the propyl side chains of lignin. The chain is Ligninase C from Trametes versicolor (White-rot fungus).